The primary structure comprises 242 residues: Small ribosomal subunit protein uS2 (242 aa).

The protein belongs to the universal ribosomal protein uS2 family.

The chain is Small ribosomal subunit protein uS2 from Shewanella denitrificans (strain OS217 / ATCC BAA-1090 / DSM 15013).